A 213-amino-acid chain; its full sequence is 3-demethoxyubiquinol 3-hydroxylase (213 aa).

Residues glutamate 62, glutamate 92, histidine 95, glutamate 144, glutamate 176, and histidine 179 each coordinate Fe cation.

The protein belongs to the COQ7 family. The cofactor is Fe cation.

The protein localises to the cell membrane. The catalysed reaction is a 5-methoxy-2-methyl-3-(all-trans-polyprenyl)benzene-1,4-diol + AH2 + O2 = a 3-demethylubiquinol + A + H2O. It participates in cofactor biosynthesis; ubiquinone biosynthesis. Catalyzes the hydroxylation of 2-nonaprenyl-3-methyl-6-methoxy-1,4-benzoquinol during ubiquinone biosynthesis. The chain is 3-demethoxyubiquinol 3-hydroxylase from Legionella pneumophila (strain Corby).